Consider the following 67-residue polypeptide: Large ribosomal subunit protein bL31 (67 aa).

Zn(2+) is bound by residues cysteine 16, cysteine 18, cysteine 38, and cysteine 41.

It belongs to the bacterial ribosomal protein bL31 family. Type A subfamily. As to quaternary structure, part of the 50S ribosomal subunit. The cofactor is Zn(2+).

Functionally, binds the 23S rRNA. This is Large ribosomal subunit protein bL31 from Thioalkalivibrio sulfidiphilus (strain HL-EbGR7).